The following is a 168-amino-acid chain: UPF0134 protein MPN_524 (168 aa).

The protein belongs to the UPF0134 family.

In Mycoplasma pneumoniae (strain ATCC 29342 / M129 / Subtype 1) (Mycoplasmoides pneumoniae), this protein is UPF0134 protein MPN_524.